A 247-amino-acid polypeptide reads, in one-letter code: MTILFLTMVISYFGCMKAAPMKEASVRGQGSLAYPGVRTHGTLESVSGPKAGSRGLTSLADTFEHVIEELLDEDQKVRPNEENNKDADLYTSRVMLSSQVPLEPPLLFLLEEYKNYLDAANMSMRVRRHSDPARRGELSVCDSISEWVTAADKKTAVDMSGGTVTVLEKVPVSKGQLKQYFYETKCNPMGYTKEGCRGIDKRHWNSQCRTTQSYVRALTMDSKKRIGWRFIRIDTSCVCTLTIKRGR.

Residues Met-1–Ala-18 form the signal peptide. A propeptide spanning residues Ala-19–Arg-128 is cleaved from the precursor. The N-linked (GlcNAc...) asparagine glycan is linked to Asn-121. Intrachain disulfides connect Cys-141-Cys-208, Cys-186-Cys-237, and Cys-196-Cys-239.

This sequence belongs to the NGF-beta family. As to quaternary structure, monomers and homodimers. Binds to NTRK2/TRKB. Can form heterodimers with other neurotrophin family members, such as NTF3 and NTF4 (in vitro), but the physiological relevance of this is not clear. BDNF precursor form: interacts with the heterodimer formed by NGFR and SORCS2. Mature BDNF has much lower affinity for the heterodimer formed by NGFR and SORCS2. In terms of processing, N-glycosylated and glycosulfated, contrary to mature BDNF. Post-translationally, mature BDNF is produced by proteolytic removal of the propeptide, catalyzed by a FURIN family member. In addition, the precursor form is proteolytically cleaved within the propeptide, but this is not an obligatory intermediate for the production of mature BDNF. Can be converted into mature BDNF by plasmin (PLG).

It is found in the secreted. Functionally, important signaling molecule that activates signaling cascades downstream of NTRK2. During development, promotes the survival and differentiation of selected neuronal populations of the peripheral and central nervous systems. Participates in axonal growth, pathfinding and in the modulation of dendritic growth and morphology. Major regulator of synaptic transmission and plasticity at adult synapses in many regions of the CNS. The versatility of BDNF is emphasized by its contribution to a range of adaptive neuronal responses including long-term potentiation (LTP), long-term depression (LTD), certain forms of short-term synaptic plasticity, as well as homeostatic regulation of intrinsic neuronal excitability. The protein is Neurotrophic factor BDNF precursor form (BDNF) of Canis lupus familiaris (Dog).